A 549-amino-acid chain; its full sequence is Glucose-6-phosphate isomerase (549 aa).

N6-acetyllysine occurs at positions 80, 228, and 234. The active-site Proton donor is Glu355. Active-site residues include His386 and Lys514.

Belongs to the GPI family.

The protein resides in the cytoplasm. The catalysed reaction is alpha-D-glucose 6-phosphate = beta-D-fructose 6-phosphate. Its pathway is carbohydrate biosynthesis; gluconeogenesis. It functions in the pathway carbohydrate degradation; glycolysis; D-glyceraldehyde 3-phosphate and glycerone phosphate from D-glucose: step 2/4. Its function is as follows. Catalyzes the reversible isomerization of glucose-6-phosphate to fructose-6-phosphate. The chain is Glucose-6-phosphate isomerase from Shigella boydii serotype 4 (strain Sb227).